A 179-amino-acid polypeptide reads, in one-letter code: Large ribosomal subunit protein uL6 (179 aa).

This sequence belongs to the universal ribosomal protein uL6 family. Part of the 50S ribosomal subunit.

In terms of biological role, this protein binds to the 23S rRNA, and is important in its secondary structure. It is located near the subunit interface in the base of the L7/L12 stalk, and near the tRNA binding site of the peptidyltransferase center. The chain is Large ribosomal subunit protein uL6 from Acaryochloris marina (strain MBIC 11017).